Consider the following 167-residue polypeptide: Modulator of smoothened protein (167 aa).

4 helical membrane-spanning segments follow: residues 7-29 (ISGCLFLAADIFAIASIANPDWI), 68-88 (TLFFIILGIVSLTITCGLLVI), 101-121 (WIAFMGMVLFCMAALIFPVGF), and 139-159 (VGSSYVLFVLSIFFTIVGLLF).

The protein resides in the cell projection. It is found in the cilium membrane. It localises to the cell membrane. Its function is as follows. Acts as a negative regulator of hedgehog signaling probably by promoting internalization and subsequent degradation of smoothened protein (SMO) present in the ciliary membrane. Plays a role in sonic hedgehog (SHH)-induced spinal neural progenitor cells differentiation. This is Modulator of smoothened protein from Danio rerio (Zebrafish).